The primary structure comprises 91 residues: Acylphosphatase (91 aa).

One can recognise an Acylphosphatase-like domain in the interval 4–91; it reads RAMVTVKGMV…GEFDDFHIAY (88 aa). Residues Arg-19 and Asn-37 contribute to the active site.

This sequence belongs to the acylphosphatase family.

It catalyses the reaction an acyl phosphate + H2O = a carboxylate + phosphate + H(+). This Geotalea uraniireducens (strain Rf4) (Geobacter uraniireducens) protein is Acylphosphatase (acyP).